Consider the following 377-residue polypeptide: Probable aspartic-type endopeptidase CTSD (377 aa).

A Peptidase A1 domain is found at 1 to 292 (SLIDTGASRT…DFDKNRVGLA (292 aa)). Asp4 is an active-site residue. N-linked (GlcNAc...) asparagine glycosylation occurs at Asn58. Asp186 is a catalytic residue. Residues 296-351 (YGETKDPPSSSHPPPAPTSNKASGGSPGLPEQSGTSSATTSTTGEPSSGSTASPSA) form a disordered region. Residues 328-351 (SGTSSATTSTTGEPSSGSTASPSA) show a composition bias toward low complexity. The GPI-anchor amidated serine moiety is linked to residue Ser350. A propeptide spans 351–377 (AASSVSMSAWLSLAVFLSTASSLILWD) (removed in mature form).

It belongs to the peptidase A1 family.

It is found in the cell membrane. In terms of biological role, secreted aspartic-type endopeptidase which is secreted and contributes to virulence. The sequence is that of Probable aspartic-type endopeptidase CTSD (CTSD) from Arthroderma otae (strain ATCC MYA-4605 / CBS 113480) (Microsporum canis).